Reading from the N-terminus, the 299-residue chain is 33 kDa chaperonin (299 aa).

2 disulfides stabilise this stretch: Cys-238–Cys-240 and Cys-271–Cys-274.

The protein belongs to the HSP33 family. Post-translationally, under oxidizing conditions two disulfide bonds are formed involving the reactive cysteines. Under reducing conditions zinc is bound to the reactive cysteines and the protein is inactive.

The protein resides in the cytoplasm. Its function is as follows. Redox regulated molecular chaperone. Protects both thermally unfolding and oxidatively damaged proteins from irreversible aggregation. Plays an important role in the bacterial defense system toward oxidative stress. This is 33 kDa chaperonin from Alkaliphilus oremlandii (strain OhILAs) (Clostridium oremlandii (strain OhILAs)).